We begin with the raw amino-acid sequence, 71 residues long: Small ribosomal subunit protein bS21 (71 aa).

The protein belongs to the bacterial ribosomal protein bS21 family.

The sequence is that of Small ribosomal subunit protein bS21 from Ruthia magnifica subsp. Calyptogena magnifica.